The primary structure comprises 679 residues: DNA ligase (679 aa).

NAD(+) is bound by residues 41–45 (DSVYD), 90–91 (SL), and E120. Residue K122 is the N6-AMP-lysine intermediate of the active site. NAD(+) is bound by residues R143, E177, K293, and K317. Positions 411, 414, 429, and 434 each coordinate Zn(2+). Residues 597 to 679 (DSNSWFAGKR…SETMREDAQA (83 aa)) enclose the BRCT domain.

Belongs to the NAD-dependent DNA ligase family. LigA subfamily. Mg(2+) serves as cofactor. The cofactor is Mn(2+).

It catalyses the reaction NAD(+) + (deoxyribonucleotide)n-3'-hydroxyl + 5'-phospho-(deoxyribonucleotide)m = (deoxyribonucleotide)n+m + AMP + beta-nicotinamide D-nucleotide.. Its function is as follows. DNA ligase that catalyzes the formation of phosphodiester linkages between 5'-phosphoryl and 3'-hydroxyl groups in double-stranded DNA using NAD as a coenzyme and as the energy source for the reaction. It is essential for DNA replication and repair of damaged DNA. This is DNA ligase from Lactiplantibacillus plantarum (strain ATCC BAA-793 / NCIMB 8826 / WCFS1) (Lactobacillus plantarum).